We begin with the raw amino-acid sequence, 366 residues long: Melatonin receptor type 1A (366 aa).

Residues 1-45 (MAGRLWGSPGGTPKGNGSSALLNVSQAAPGAGDGVRPRPSWLAAT) lie on the Extracellular side of the membrane. N-linked (GlcNAc...) asparagine glycans are attached at residues N16 and N23. The chain crosses the membrane as a helical span at residues 46–66 (LASILIFTIVVDIVGNLLVVL). Residues 67-79 (SVYRNKKLRNAGN) lie on the Cytoplasmic side of the membrane. A helical transmembrane segment spans residues 80–100 (VFVVSLAVADLLVAVYPYPLA). The Extracellular portion of the chain corresponds to 101–118 (LASIVNNGWSLSSLHCQL). A disulfide bridge links C116 with C193. A helical membrane pass occupies residues 119-139 (SGFLMGLSVIGSVFSITGIAI). Residues 140-158 (NRYCCICHSLRYGKLYSGT) lie on the Cytoplasmic side of the membrane. A helical transmembrane segment spans residues 159–179 (NSLCYVFLIWTLTLVAIVPNL). Residues 180–203 (CVGTLQYDPRIYSCTFTQSVSSAY) lie on the Extracellular side of the membrane. The chain crosses the membrane as a helical span at residues 204 to 224 (TIAVVVFHFIVPMLVVVFCYL). The Cytoplasmic segment spans residues 225 to 256 (RIWALVLQVRWKVKPDNKPKLKPQDFRNFVTM). Residues 257–277 (FVVFVLFAICWAPLNFIGLVV) form a helical membrane-spanning segment. The Extracellular portion of the chain corresponds to 278–290 (ASDPASMAPRIPE). Residues 291-311 (WLFVASYYMAYFNSCLNAIIY) traverse the membrane as a helical segment. Over 312–366 (GLLNQNFRQEYRKIIVSLCTTKMFFVDSSNHVADRIKRKPSPLIANHNLIKVDSV) the chain is Cytoplasmic.

Belongs to the G-protein coupled receptor 1 family.

It localises to the cell membrane. Functionally, high affinity receptor for melatonin. Likely to mediate the reproductive and circadian actions of melatonin. The activity of this receptor is mediated by pertussis toxin sensitive G proteins that inhibit adenylate cyclase activity. Possibly involved in sleep induction, by melatonin activation of the potassium channel KCNMA1/BK and the dissociation of G-beta and G-gamma subunits, thereby decreasing synaptic transmission. The chain is Melatonin receptor type 1A (MTNR1A) from Ovis aries (Sheep).